Reading from the N-terminus, the 75-residue chain is UPF0352 protein VP2129 (75 aa).

The protein belongs to the UPF0352 family.

This Vibrio parahaemolyticus serotype O3:K6 (strain RIMD 2210633) protein is UPF0352 protein VP2129.